The chain runs to 177 residues: NAD(P)H-quinone oxidoreductase subunit 6, chloroplastic (177 aa).

A run of 5 helical transmembrane segments spans residues 10-30, 33-53, 61-81, 92-112, and 152-172; these read ILVV…VLFT, IYSA…YILL, AQLL…VMFM, LWTV…FLLI, and FFLP…GAIS.

It belongs to the complex I subunit 6 family. In terms of assembly, NDH is composed of at least 16 different subunits, 5 of which are encoded in the nucleus.

The protein resides in the plastid. Its subcellular location is the chloroplast thylakoid membrane. The catalysed reaction is a plastoquinone + NADH + (n+1) H(+)(in) = a plastoquinol + NAD(+) + n H(+)(out). It catalyses the reaction a plastoquinone + NADPH + (n+1) H(+)(in) = a plastoquinol + NADP(+) + n H(+)(out). Functionally, NDH shuttles electrons from NAD(P)H:plastoquinone, via FMN and iron-sulfur (Fe-S) centers, to quinones in the photosynthetic chain and possibly in a chloroplast respiratory chain. The immediate electron acceptor for the enzyme in this species is believed to be plastoquinone. Couples the redox reaction to proton translocation, and thus conserves the redox energy in a proton gradient. In Lemna minor (Common duckweed), this protein is NAD(P)H-quinone oxidoreductase subunit 6, chloroplastic (ndhG).